The sequence spans 382 residues: Lipid-A-disaccharide synthase (382 aa).

It belongs to the LpxB family.

It catalyses the reaction 2-N,3-O-bis[(3R)-3-hydroxytetradecanoyl]-alpha-D-glucosaminyl 1-phosphate + UDP-2-N,3-O-bis[(3R)-3-hydroxytetradecanoyl]-alpha-D-glucosamine = lipid A disaccharide (E. coli) + UDP + H(+). It carries out the reaction a lipid X + a UDP-2-N,3-O-bis[(3R)-3-hydroxyacyl]-alpha-D-glucosamine = a lipid A disaccharide + UDP + H(+). Its pathway is glycolipid biosynthesis; lipid IV(A) biosynthesis; lipid IV(A) from (3R)-3-hydroxytetradecanoyl-[acyl-carrier-protein] and UDP-N-acetyl-alpha-D-glucosamine: step 5/6. In terms of biological role, condensation of UDP-2,3-diacylglucosamine and 2,3-diacylglucosamine-1-phosphate to form lipid A disaccharide, a precursor of lipid A, a phosphorylated glycolipid that anchors the lipopolysaccharide to the outer membrane of the cell. In Salmonella agona (strain SL483), this protein is Lipid-A-disaccharide synthase.